The following is a 151-amino-acid chain: S-ribosylhomocysteine lyase (151 aa).

Positions 54, 58, and 121 each coordinate Fe cation.

This sequence belongs to the LuxS family. Homodimer. Fe cation is required as a cofactor.

The enzyme catalyses S-(5-deoxy-D-ribos-5-yl)-L-homocysteine = (S)-4,5-dihydroxypentane-2,3-dione + L-homocysteine. Functionally, involved in the synthesis of autoinducer 2 (AI-2) which is secreted by bacteria and is used to communicate both the cell density and the metabolic potential of the environment. The regulation of gene expression in response to changes in cell density is called quorum sensing. Catalyzes the transformation of S-ribosylhomocysteine (RHC) to homocysteine (HC) and 4,5-dihydroxy-2,3-pentadione (DPD). The sequence is that of S-ribosylhomocysteine lyase from Clostridium botulinum (strain Alaska E43 / Type E3).